Consider the following 351-residue polypeptide: Sulfate/thiosulfate import ATP-binding protein CysA (351 aa).

The ABC transporter domain maps to 5–235 (IVVADATKRY…PANAFVMSFL (231 aa)). 37-44 (GPSGSGKS) is an ATP binding site.

This sequence belongs to the ABC transporter superfamily. Sulfate/tungstate importer (TC 3.A.1.6) family. The complex is composed of two ATP-binding proteins (CysA), two transmembrane proteins (CysT and CysW) and a solute-binding protein (CysP).

Its subcellular location is the cell membrane. It carries out the reaction sulfate(out) + ATP + H2O = sulfate(in) + ADP + phosphate + H(+). The enzyme catalyses thiosulfate(out) + ATP + H2O = thiosulfate(in) + ADP + phosphate + H(+). Part of the ABC transporter complex CysAWTP involved in sulfate/thiosulfate import. Responsible for energy coupling to the transport system. The polypeptide is Sulfate/thiosulfate import ATP-binding protein CysA (Mycobacterium bovis (strain ATCC BAA-935 / AF2122/97)).